Reading from the N-terminus, the 350-residue chain is Holliday junction branch migration complex subunit RuvB (350 aa).

Residues 1–20 are disordered; sequence MIEADRLITASPREREEQQD. The interval 4–184 is large ATPase domain (RuvB-L); that stretch reads ADRLITASPR…FGIVQRLEFY (181 aa). Residues Ile-23, Arg-24, Gly-65, Lys-68, Thr-69, Thr-70, 131-133, Arg-174, Tyr-184, and Arg-221 contribute to the ATP site; that span reads EDF. Thr-69 contacts Mg(2+). The tract at residues 185–255 is small ATPAse domain (RuvB-S); it reads GIDDLATIVT…IADQALNLLD (71 aa). The interval 258-350 is head domain (RuvB-H); the sequence is ERGFDHSDRR…SGDLFAVSDE (93 aa). Arg-294, Arg-313, and Arg-318 together coordinate DNA.

Belongs to the RuvB family. As to quaternary structure, homohexamer. Forms an RuvA(8)-RuvB(12)-Holliday junction (HJ) complex. HJ DNA is sandwiched between 2 RuvA tetramers; dsDNA enters through RuvA and exits via RuvB. An RuvB hexamer assembles on each DNA strand where it exits the tetramer. Each RuvB hexamer is contacted by two RuvA subunits (via domain III) on 2 adjacent RuvB subunits; this complex drives branch migration. In the full resolvosome a probable DNA-RuvA(4)-RuvB(12)-RuvC(2) complex forms which resolves the HJ.

The protein resides in the cytoplasm. It catalyses the reaction ATP + H2O = ADP + phosphate + H(+). Functionally, the RuvA-RuvB-RuvC complex processes Holliday junction (HJ) DNA during genetic recombination and DNA repair, while the RuvA-RuvB complex plays an important role in the rescue of blocked DNA replication forks via replication fork reversal (RFR). RuvA specifically binds to HJ cruciform DNA, conferring on it an open structure. The RuvB hexamer acts as an ATP-dependent pump, pulling dsDNA into and through the RuvAB complex. RuvB forms 2 homohexamers on either side of HJ DNA bound by 1 or 2 RuvA tetramers; 4 subunits per hexamer contact DNA at a time. Coordinated motions by a converter formed by DNA-disengaged RuvB subunits stimulates ATP hydrolysis and nucleotide exchange. Immobilization of the converter enables RuvB to convert the ATP-contained energy into a lever motion, pulling 2 nucleotides of DNA out of the RuvA tetramer per ATP hydrolyzed, thus driving DNA branch migration. The RuvB motors rotate together with the DNA substrate, which together with the progressing nucleotide cycle form the mechanistic basis for DNA recombination by continuous HJ branch migration. Branch migration allows RuvC to scan DNA until it finds its consensus sequence, where it cleaves and resolves cruciform DNA. The protein is Holliday junction branch migration complex subunit RuvB of Ectopseudomonas mendocina (strain ymp) (Pseudomonas mendocina).